The sequence spans 136 residues: Histone H3.2 (136 aa).

The disordered stretch occupies residues 1 to 20 (MARTKQTARKSTGGKAPRKQ). At K5 the chain carries N6-methylated lysine. K10 is modified (N6-acetyllysine; alternate). Residue K10 is modified to N6-methylated lysine; alternate. The residue at position 11 (S11) is a Phosphoserine. T12 is subject to Phosphothreonine. Position 15 is an N6-acetyllysine (K15). N6-acetyllysine; alternate is present on residues K19 and K24. N6-methylated lysine; alternate occurs at positions 19 and 24. An N6-methylated lysine modification is found at K37.

The protein belongs to the histone H3 family. The nucleosome is a histone octamer containing two molecules each of H2A, H2B, H3 and H4 assembled in one H3-H4 heterotetramer and two H2A-H2B heterodimers. The octamer wraps approximately 147 bp of DNA. In terms of processing, acetylation is generally linked to gene activation. Can be acetylated to form H3K9ac, H3K14ac, H3K18ac and H3K23ac. H3K9ac could compete with H3K9me and prevent gene silencing. H3K9ac is restricted to euchromatin. Methylated to form mainly H3K4me, H3K9me, H3K18me, H3K23me and H3K36me. H3K4me1/2/3, H3K9me3 and H3K36me1/2/3 are typical marks for euchromatin, whereas heterochromatic chromocenters are enriched in H3K9me1/2. H2BK143ub1 is probably prerequisite for H3K4me. Post-translationally, can be phosphorylated to form H3S10ph and H3T11ph.

Its subcellular location is the nucleus. It is found in the chromosome. Core component of nucleosome. Nucleosomes wrap and compact DNA into chromatin, limiting DNA accessibility to the cellular machineries which require DNA as a template. Histones thereby play a central role in transcription regulation, DNA repair, DNA replication and chromosomal stability. DNA accessibility is regulated via a complex set of post-translational modifications of histones, also called histone code, and nucleosome remodeling. This is Histone H3.2 from Cichorium intybus (Chicory).